A 479-amino-acid polypeptide reads, in one-letter code: Membrane-bound lytic murein transglycosylase F (479 aa).

The first 15 residues, M1–A15, serve as a signal peptide directing secretion. Residues G16–V258 form a non-LT domain region. The LT domain stretch occupies residues R260–P479. E303 is an active-site residue. Residues L457–P479 form a disordered region. A compositionally biased stretch (basic and acidic residues) spans E461–Q470.

This sequence in the N-terminal section; belongs to the bacterial solute-binding protein 3 family. It in the C-terminal section; belongs to the transglycosylase Slt family.

The protein localises to the cell outer membrane. It catalyses the reaction Exolytic cleavage of the (1-&gt;4)-beta-glycosidic linkage between N-acetylmuramic acid (MurNAc) and N-acetylglucosamine (GlcNAc) residues in peptidoglycan, from either the reducing or the non-reducing ends of the peptidoglycan chains, with concomitant formation of a 1,6-anhydrobond in the MurNAc residue.. In terms of biological role, murein-degrading enzyme that degrades murein glycan strands and insoluble, high-molecular weight murein sacculi, with the concomitant formation of a 1,6-anhydromuramoyl product. Lytic transglycosylases (LTs) play an integral role in the metabolism of the peptidoglycan (PG) sacculus. Their lytic action creates space within the PG sacculus to allow for its expansion as well as for the insertion of various structures such as secretion systems and flagella. This is Membrane-bound lytic murein transglycosylase F from Shewanella pealeana (strain ATCC 700345 / ANG-SQ1).